Reading from the N-terminus, the 266-residue chain is GATA-type zinc finger protein 1 (266 aa).

Disordered regions lie at residues 1–31 (MEAAQAGDLTRRQELLAPPCLDTESLRKSRP), 106–129 (TQCPNLEISSATSPASLQRRPRKQ), and 171–191 (CSQKLPASPSKALASPGSSEA). The span at 106–121 (TQCPNLEISSATSPAS) shows a compositional bias: polar residues. Residues 197-221 (CASCRTQRTPLWRDAEDGTPLCNAC) form a GATA-type zinc finger.

Specifically expressed in adult testis and ovary. Expressed at high levels in the somatic cells of the developing gonads, including Leydig cells in the testes and granulosa cells in the ovaries.

It localises to the nucleus. Transcriptional regulator that plays a key role in germ cell development. Determines the oogenic fate by activating key genes for the oogenic program and meiotic prophase entry. Acts downstream of bone morphogenetic protein (BMP) by regulating expression of genes required for the oogenic programs, which are repressed by Polycomb activities in sexually uncommitted germ cells. Regulates expression of STRA8, a central downstream effector for the meiotic program. Acts independently of retinoic acid (RA). In males, not required for germ-cell sex determination, but required to allow the spermatogonia to efficiently accomplish the meiotic prophase. The protein is GATA-type zinc finger protein 1 of Mus musculus (Mouse).